We begin with the raw amino-acid sequence, 385 residues long: MPHTKKILVIGASIAGPALCYWLNHYGFQPTLVEKNQSTRKGGYAIDLRGIAVDVAKQMGIYDSVCAMRTSLQCVRYVDAAGNLLFEEHGEKGGFRQGDEVEIVRGDLVDILMKTITDIPCFYDHAIESLTQHDDHVTVQFKNGKTENYDLVIAADGLHSATRRMVFSKDDYHLRNLGCYISVFSIPNYLQLDHCETLLEAKQKLVSITSDKDSTKAFAGFMFRSSNSPNYIRDEASQKDFLRENFTNHGWESNKLLSLMNDANDFYFDAIMQVKMKDWTKGRIALVGDAGYTPSPLSGQGTSLALVGAYILAGELKTATDHVAAFARYNELLKPYVEANQAFGVWVSESFLADEPLSAEQAEERNNIVLGIMKKATHAIELPEY.

Residues 12 to 15 (ASIA), 34 to 36 (EKN), 44 to 47 (YAID), Arg105, Tyr267, Asp289, and 296 to 302 (PLSGQGT) each bind FAD.

It belongs to the aromatic-ring hydroxylase family. FAD is required as a cofactor.

The catalysed reaction is 7-chlorotetracycline + NADPH + O2 + H(+) = (1S,10S,10aS)-3-(CONH2)-9-Cl-1-(Me2N)-3,3a,4,10-(HO)4-10-Me-2,5-dioxo-1H,10aH,11H,11aH-cyclopenta[b]anthracen-6-olate + CO + NADP(+) + H2O. It carries out the reaction a tetracycline + NADPH + O2 + H(+) = a (1S,10aS)-3-(CONH2)-1-(Me2N)-3,3a,4,6-(HO)4-2,5-dioxo-1H,10aH,11H,11aH-cyclopenta[b]anthracene + CO + NADP(+) + H2O. Inhibited by anhydrotetracycline. An FAD-requiring monooxygenase active on tetracycline antibiotic and some of its derivatives, which leads to their inactivation. Expression in E.coli confers high resistance to oxytetracycline, slightly less resistance to tetracycline, moderate resistance to minocycline but no resistance to tigecycline. Degrades tetracycline and oxytetracycline; the reaction requires NADPH. Degrades and confers resistance to chlortetracycline. This chain is Flavin-dependent monooxygenase, found in Unknown prokaryotic organism.